Here is a 507-residue protein sequence, read N- to C-terminus: Sugar transport protein 8 (507 aa).

At 1-21 (MAVVISSNGNSKSFDAKMTVY) the chain is on the cytoplasmic side. The next 12 membrane-spanning stretches (helical) occupy residues 22–42 (VFIC…DIGI), 79–99 (FLQL…FFAS), 116–136 (IFFL…MLII), 139–159 (ILLG…LSEI), 166–186 (GGLN…ANIV), 200–220 (IALG…LLIC), 281–301 (FVIG…AIMF), 319–339 (LSAV…IFLV), 346–366 (FLLL…GIIL), 382–402 (LVVV…WGPL), 419–439 (GFAL…QAFL), and 448–468 (GIFF…LFFV). Residues 469–507 (PETKGVSIDDMRDSVWKLHWYWKRFMLEEDEHDVEKRTD) are Cytoplasmic-facing.

The protein belongs to the major facilitator superfamily. Sugar transporter (TC 2.A.1.1) family.

It is found in the membrane. Its function is as follows. Mediates an active uptake of hexoses, probably by sugar/hydrogen symport. The polypeptide is Sugar transport protein 8 (STP8) (Arabidopsis thaliana (Mouse-ear cress)).